Reading from the N-terminus, the 444-residue chain is Nuclear distribution protein PAC1 (444 aa).

Residues 59–87 (TAIARLQRRIMSLEQNIRDLREASIEMNA) are a coiled coil. 7 WD repeats span residues 113-152 (TLES…LPLA), 156-199 (AHTR…KLLR), 204-251 (HEHV…CLKS), 254-293 (PHSD…SVGL), 307-347 (SLQD…RLPQ), 367-406 (GHDS…KKWN), and 408-444 (IHQG…IFMQ).

The protein belongs to the WD repeat LIS1/nudF family. Self-associates. Interacts with NDL1 and dynein.

It is found in the cytoplasm. Its subcellular location is the cytoskeleton. The protein resides in the spindle pole. Functionally, positively regulates the activity of the minus-end directed microtubule motor protein dynein. Plays a central role in positioning the mitotic spindle at the bud neck during cell division. Targets cytoplasmic dynein to microtubule plus ends, thereby promoting dynein-mediated microtubule sliding along the bud cortex and consequently the movement of the mitotic spindle to the bud neck. The polypeptide is Nuclear distribution protein PAC1 (Zygosaccharomyces rouxii (strain ATCC 2623 / CBS 732 / NBRC 1130 / NCYC 568 / NRRL Y-229)).